A 175-amino-acid chain; its full sequence is Regenerating islet-derived protein 3-beta (175 aa).

A signal peptide spans 1–26 (MLPPTACSVMSWMLLSCLMLLSQVQG). A propeptide spanning residues 27 to 37 (EDSLKNIPSAR) is cleaved from the precursor. Disulfide bonds link Cys40–Cys51, Cys68–Cys171, and Cys146–Cys163. The region spanning 47–172 (YGSYCYALFQ…CEVKLPYVCK (126 aa)) is the C-type lectin domain. Residue His107 coordinates Zn(2+). Residues 114 to 116 (EPN) carry the EPN motif. Glu121 is a binding site for Zn(2+).

Forms a hexameric membrane-permeabilizing oligomeric pore on membrane phospholipids. The hexamer is formed by three dimers related by helical symmetry. Forms filaments, filamentation traps pore complexes and limits damage to host cells. Interacts with EXTL3. Post-translationally, proteolytic processing by trypsin removes an inhibitory N-terminal propeptide and is essential for peptidoglycan binding and antibacterial activity. As to expression, constitutively expressed in the small intestine, moderately in colon and at an extremely low level in healthy pancreas.

The protein localises to the secreted. With respect to regulation, lipopolysaccharide inhibits pore-forming activity, explaining why is bactericidal for Gram-positive but not Gram-negative bacteria. Bactericidal C-type lectin which acts against several intestinal Gram-positive and Gram-negative bacteria. Lacks antibacterial activity against S.typhimurium. May play a role in protection against infection with S.enteritidis by inhibiting its translocation from the gut lumen into intestinal tissues and further extraintestinal tissues. Its function is as follows. Acts as a hormone in response to different stimuli. Secreted by different cell types to activate its receptor EXTL3 and induce cell specific signaling pathways. In pancreas, is able stimulate cell proliferation. This Mus musculus (Mouse) protein is Regenerating islet-derived protein 3-beta.